A 669-amino-acid polypeptide reads, in one-letter code: MSDAQQITLIVDGEETKVTEGTTGAELFFERRDVVVARVNGVLKDLDQVLTEGADVEGVTIDSPDGLNVLRHSTAHVMAQAVQQLRPEAKLGIGPYITDGFYFDFDVADPFTPEDLRTLEKMMQKIINQNQKFVRRVVTEEEAREAMANEPYKLELLGKKNDASDAAEGVNVEVGAGDITIYDNVDRKSGESIWCDLCRGPHLQNTKIISNAFALTRSSAAYWLGNQNNQQLQRIYGTAWPTKEALKAYQERIAEAERRDHRKLGVELDLFSFPDELGSGLPVFHPKGGIIRKAMEDYSRQRHVDAGYEFVYTPHITKGHLYEVSGHLDWYKDGMFPAMQVDAEFNEDGSVRKPAQDYYLKPMNCPMHNLIFRSRGRSYRELPLRLFEFGSVYRYEKSGVVHGLTRVRGMTQDDAHIYCTREQMKDELTTTLNFVLGLLKDYGLDDFYLELSTKNEEKFVGDDAAWEEATRTLSEVAEASGLHLVPDPGGAAFYGPKISVQAKDALGRTWQMSTIQLDFNLPERFELEYQAADGTRQRPVMIHRALFGSVERFMGVLTEHYAGAFPAWLAPVQVVGIPVAETFNDYMFDVVGQLKAAGIRAEVDISSDRFPKKIRTASKDKIPFVLIAGGEDAEAGAVSFRFRDGSQDNGVPVAEAVRRIVDAVKNRES.

One can recognise a TGS domain in the interval 3–60; it reads DAQQITLIVDGEETKVTEGTTGAELFFERRDVVVARVNGVLKDLDQVLTEGADVEGVT. A catalytic region spans residues 260–566; sequence DHRKLGVELD…LTEHYAGAFP (307 aa). Zn(2+)-binding residues include Cys365, His416, and His543.

The protein belongs to the class-II aminoacyl-tRNA synthetase family. Homodimer. The cofactor is Zn(2+).

Its subcellular location is the cytoplasm. The catalysed reaction is tRNA(Thr) + L-threonine + ATP = L-threonyl-tRNA(Thr) + AMP + diphosphate + H(+). Functionally, catalyzes the attachment of threonine to tRNA(Thr) in a two-step reaction: L-threonine is first activated by ATP to form Thr-AMP and then transferred to the acceptor end of tRNA(Thr). Also edits incorrectly charged L-seryl-tRNA(Thr). The chain is Threonine--tRNA ligase from Paenarthrobacter aurescens (strain TC1).